We begin with the raw amino-acid sequence, 345 residues long: Glycerol-3-phosphate dehydrogenase [NAD(P)+] (345 aa).

4 residues coordinate NADPH: Ser23, Tyr24, His44, and Lys118. Residues Lys118, Gly147, and Thr149 each contribute to the sn-glycerol 3-phosphate site. Ala151 lines the NADPH pocket. Lys203, Asp256, Ser266, Arg267, and Asn268 together coordinate sn-glycerol 3-phosphate. Lys203 (proton acceptor) is an active-site residue. Residue Arg267 coordinates NADPH. Residues Val291 and Glu293 each contribute to the NADPH site.

This sequence belongs to the NAD-dependent glycerol-3-phosphate dehydrogenase family.

It localises to the cytoplasm. The catalysed reaction is sn-glycerol 3-phosphate + NAD(+) = dihydroxyacetone phosphate + NADH + H(+). It carries out the reaction sn-glycerol 3-phosphate + NADP(+) = dihydroxyacetone phosphate + NADPH + H(+). The protein operates within membrane lipid metabolism; glycerophospholipid metabolism. Catalyzes the reduction of the glycolytic intermediate dihydroxyacetone phosphate (DHAP) to sn-glycerol 3-phosphate (G3P), the key precursor for phospholipid synthesis. This Vibrio parahaemolyticus serotype O3:K6 (strain RIMD 2210633) protein is Glycerol-3-phosphate dehydrogenase [NAD(P)+].